Here is a 175-residue protein sequence, read N- to C-terminus: 6,7-dimethyl-8-ribityllumazine synthase (175 aa).

Residues Phe-24, 58–60, and 82–84 each bind 5-amino-6-(D-ribitylamino)uracil; these read ALE and AVI. 87–88 provides a ligand contact to (2S)-2-hydroxy-3-oxobutyl phosphate; sequence ET. His-90 functions as the Proton donor in the catalytic mechanism. Position 115 (Asn-115) interacts with 5-amino-6-(D-ribitylamino)uracil. Arg-129 lines the (2S)-2-hydroxy-3-oxobutyl phosphate pocket. The segment at 150-175 is disordered; it reads ALEPEEDDEDEDDEDEDFDDEEDDGR. The span at 152 to 175 shows a compositional bias: acidic residues; the sequence is EPEEDDEDEDDEDEDFDDEEDDGR.

It belongs to the DMRL synthase family.

The enzyme catalyses (2S)-2-hydroxy-3-oxobutyl phosphate + 5-amino-6-(D-ribitylamino)uracil = 6,7-dimethyl-8-(1-D-ribityl)lumazine + phosphate + 2 H2O + H(+). It participates in cofactor biosynthesis; riboflavin biosynthesis; riboflavin from 2-hydroxy-3-oxobutyl phosphate and 5-amino-6-(D-ribitylamino)uracil: step 1/2. Functionally, catalyzes the formation of 6,7-dimethyl-8-ribityllumazine by condensation of 5-amino-6-(D-ribitylamino)uracil with 3,4-dihydroxy-2-butanone 4-phosphate. This is the penultimate step in the biosynthesis of riboflavin. The sequence is that of 6,7-dimethyl-8-ribityllumazine synthase from Bordetella bronchiseptica (strain ATCC BAA-588 / NCTC 13252 / RB50) (Alcaligenes bronchisepticus).